The primary structure comprises 575 residues: Transcription factor coe2 (575 aa).

An interaction with DNA region spans residues Arg-63–Asn-66. A C5-type zinc finger spans residues Cys-151–Cys-170. 2 interaction with DNA regions span residues Asn-197–Asn-204 and Asn-236–Lys-239. The IPT/TIG domain occupies Pro-254 to Tyr-336. The segment at Ile-450–Met-487 is disordered. The span at Ser-454 to Ser-476 shows a compositional bias: low complexity. Over residues Asn-477–Met-487 the composition is skewed to polar residues.

This sequence belongs to the COE family.

It is found in the nucleus. May play a pivotal role in the transcriptional cascade that specifies primary neurons in embryos. Stabilizes the higher neural potential of selected progenitor cells that express neurog2/X-ngnr-1 by maintaining Delta-Notch signaling. Thus ensures the transition between neural competence and irreversible commitment to a neural fate. Also promotes neuronal differentiation by activating neurod1 expression, directly or indirectly. The polypeptide is Transcription factor coe2 (Xenopus tropicalis (Western clawed frog)).